A 262-amino-acid polypeptide reads, in one-letter code: Short-chain Z-isoprenyl diphosphate synthase (262 aa).

Residue Asp40 is part of the active site. Asp40 is a binding site for Mg(2+). Substrate-binding positions include 41–44, Trp45, and 86–88; these read GNRR and STE. The active-site Proton acceptor is Asn89. Substrate contacts are provided by residues Arg92, Arg211, and 217–219; that span reads RLS. Glu230 is a Mg(2+) binding site.

Belongs to the UPP synthase family. Z-FPP synthase subfamily. Mg(2+) is required as a cofactor.

It catalyses the reaction isopentenyl diphosphate + (2E)-geranyl diphosphate = (2Z,6E)-farnesyl diphosphate + diphosphate. The protein operates within phospholipid metabolism; decaprenyl phosphate biosynthesis. Its function is as follows. Generates Z-farnesyl diphosphate (Z-FPP) from isopentenyl pyrophosphate (IPP). Z-FPP is the precursor of decaprenyl diphosphate, which has a central role in the biosynthesis of the mycobacterial cell wall. This chain is Short-chain Z-isoprenyl diphosphate synthase, found in Mycobacterium leprae (strain TN).